Consider the following 237-residue polypeptide: MASGQARPPFEEESPQPSTTVRSPEVVVDDEVPGPSAPWIDPSPQPQSLGLKRKSEWSDESEEELEEELELERAPEPEDTWVVETLCGLKMKLKRKRASSVLPEHHEAFNRLLGDPVVQKFLAWDKDLRVSDKYLLAMVIAYFSRAGLFSWQYQRIHFFLALYLASDMEEDNQAPKQDIFSFLYGKNYSQRPLFHKLRYQLLCSMRWRTWVSPEEMEEIQAYDPEHWVWARDRTLIS.

The tract at residues 1-61 is disordered; the sequence is MASGQARPPF…KRKSEWSDES (61 aa).

This sequence belongs to the Speedy/Ringo family. In terms of tissue distribution, predominantly expressed in testis.

The protein is Speedy protein E4 of Homo sapiens (Human).